The sequence spans 89 residues: MAHKKGASSSRNGRDSNAQRLGVKRFGGQLVNAGEIIVRQRGTHFHPGDGVGRGGDDTLFALRDGNVEFGTRRGRRVVNVTPVEAPVEA.

The tract at residues 1 to 22 is disordered; that stretch reads MAHKKGASSSRNGRDSNAQRLG. Residues 7–19 are compositionally biased toward polar residues; that stretch reads ASSSRNGRDSNAQ.

The protein belongs to the bacterial ribosomal protein bL27 family.

In Cutibacterium acnes (strain DSM 16379 / KPA171202) (Propionibacterium acnes), this protein is Large ribosomal subunit protein bL27.